Consider the following 449-residue polypeptide: Signal recognition particle protein (449 aa).

Residues 109–116 (GLQGSGKT), 191–195 (DTAGR), and 249–252 (SRID) contribute to the GTP site.

Belongs to the GTP-binding SRP family. SRP54 subfamily. In terms of assembly, part of the signal recognition particle protein translocation system, which is composed of SRP and FtsY. SRP is a ribonucleoprotein composed of Ffh and a 4.5S RNA molecule.

The protein localises to the cytoplasm. It catalyses the reaction GTP + H2O = GDP + phosphate + H(+). Its function is as follows. Involved in targeting and insertion of nascent membrane proteins into the cytoplasmic membrane. Binds to the hydrophobic signal sequence of the ribosome-nascent chain (RNC) as it emerges from the ribosomes. The SRP-RNC complex is then targeted to the cytoplasmic membrane where it interacts with the SRP receptor FtsY. Interaction with FtsY leads to the transfer of the RNC complex to the Sec translocase for insertion into the membrane, the hydrolysis of GTP by both Ffh and FtsY, and the dissociation of the SRP-FtsY complex into the individual components. The sequence is that of Signal recognition particle protein from Rickettsia bellii (strain RML369-C).